The primary structure comprises 377 residues: Succinyl-diaminopimelate desuccinylase (377 aa).

His-66 serves as a coordination point for Zn(2+). Asp-68 is a catalytic residue. Zn(2+) is bound at residue Asp-99. Residue Glu-133 is the Proton acceptor of the active site. Zn(2+) is bound by residues Glu-134, Glu-162, and His-348.

This sequence belongs to the peptidase M20A family. DapE subfamily. As to quaternary structure, homodimer. It depends on Zn(2+) as a cofactor. Requires Co(2+) as cofactor.

It catalyses the reaction N-succinyl-(2S,6S)-2,6-diaminopimelate + H2O = (2S,6S)-2,6-diaminopimelate + succinate. Its pathway is amino-acid biosynthesis; L-lysine biosynthesis via DAP pathway; LL-2,6-diaminopimelate from (S)-tetrahydrodipicolinate (succinylase route): step 3/3. Functionally, catalyzes the hydrolysis of N-succinyl-L,L-diaminopimelic acid (SDAP), forming succinate and LL-2,6-diaminopimelate (DAP), an intermediate involved in the bacterial biosynthesis of lysine and meso-diaminopimelic acid, an essential component of bacterial cell walls. The protein is Succinyl-diaminopimelate desuccinylase of Histophilus somni (strain 2336) (Haemophilus somnus).